We begin with the raw amino-acid sequence, 382 residues long: Sialidase (382 aa).

Position 37 (Arg37) interacts with substrate. A disulfide bridge connects residues Cys42 and Cys103. Residue Asp62 is the Proton acceptor of the active site. BNR repeat units follow at residues 71–82 (ARSTDGGKTWNK), 145–156 (YKSTDDGVTFSK), and 210–220 (IYSTDGITWSL). Residue Arg246 participates in substrate binding. Residues 254 to 265 (FETKDFGKTWTE) form a BNR 4 repeat. Arg309 provides a ligand contact to substrate. Tyr342 serves as the catalytic Nucleophile. Glu361 is an active-site residue.

It belongs to the glycosyl hydrolase 33 family. Monomer.

It carries out the reaction Hydrolysis of alpha-(2-&gt;3)-, alpha-(2-&gt;6)-, alpha-(2-&gt;8)- glycosidic linkages of terminal sialic acid residues in oligosaccharides, glycoproteins, glycolipids, colominic acid and synthetic substrates.. Cleaves the terminal sialic acid (N-acetyl neuraminic acid) from carbohydrate chains in glycoproteins providing free sialic acid which can be used as carbon and energy sources. Sialidases have been suggested to be pathogenic factors in microbial infections. In Salmonella typhimurium (strain LT2 / SGSC1412 / ATCC 700720), this protein is Sialidase (nanH).